The following is a 371-amino-acid chain: MPLYIGLMSGTSLDGIDAALVRCGEGRPEWLGATGLPFSAALHDDLLALCLAREVSFAELARLETAFCERQAEAVNRLLLETGTPREAITAIGSHGQTIEHAPNATPAHTYQLDNPSLLAELTGCAVVGDLRRRDLAAGGQAAPLAPAFHAALFTASEAYRLVLNLGGIANLTRLPPSGQAAPVVGFDTGPANMLMDAWSQRHLGHPYDADGAWAASGRVDDALLARLLDDDYFSRLPPKSTGREHFHLDWLTSRLSGHESPCDVQATLAELTAASIAMGVTQCSAGVSTAYDALIPCGGGAHNADLLTRIQRHLPEIPLTPCERFGWSPDWLEAGAFAWLAHQRVAGLPGNLPDVTGARGPRVLGGLYAG.

10 to 17 contacts ATP; that stretch reads GTSLDGID.

This sequence belongs to the anhydro-N-acetylmuramic acid kinase family.

The enzyme catalyses 1,6-anhydro-N-acetyl-beta-muramate + ATP + H2O = N-acetyl-D-muramate 6-phosphate + ADP + H(+). It participates in amino-sugar metabolism; 1,6-anhydro-N-acetylmuramate degradation. The protein operates within cell wall biogenesis; peptidoglycan recycling. Functionally, catalyzes the specific phosphorylation of 1,6-anhydro-N-acetylmuramic acid (anhMurNAc) with the simultaneous cleavage of the 1,6-anhydro ring, generating MurNAc-6-P. Is required for the utilization of anhMurNAc either imported from the medium or derived from its own cell wall murein, and thus plays a role in cell wall recycling. The protein is Anhydro-N-acetylmuramic acid kinase of Chromohalobacter salexigens (strain ATCC BAA-138 / DSM 3043 / CIP 106854 / NCIMB 13768 / 1H11).